We begin with the raw amino-acid sequence, 957 residues long: Leucine--tRNA ligase (957 aa).

Residues 66–77 (PYPSGAGLHVGH) carry the 'HIGH' region motif. Positions 728-732 (KMGKS) match the 'KMSKS' region motif. Residue Lys731 coordinates ATP.

This sequence belongs to the class-I aminoacyl-tRNA synthetase family.

The protein localises to the cytoplasm. It carries out the reaction tRNA(Leu) + L-leucine + ATP = L-leucyl-tRNA(Leu) + AMP + diphosphate. In Streptomyces griseus subsp. griseus (strain JCM 4626 / CBS 651.72 / NBRC 13350 / KCC S-0626 / ISP 5235), this protein is Leucine--tRNA ligase.